Reading from the N-terminus, the 122-residue chain is Small ribosomal subunit protein uS13 (122 aa).

Positions 95 to 122 (GLPVRGQRTRTNARTRKGPRKTVAKKKK) are disordered.

This sequence belongs to the universal ribosomal protein uS13 family. As to quaternary structure, part of the 30S ribosomal subunit. Forms a loose heterodimer with protein S19. Forms two bridges to the 50S subunit in the 70S ribosome.

Located at the top of the head of the 30S subunit, it contacts several helices of the 16S rRNA. In the 70S ribosome it contacts the 23S rRNA (bridge B1a) and protein L5 of the 50S subunit (bridge B1b), connecting the 2 subunits; these bridges are implicated in subunit movement. Contacts the tRNAs in the A and P-sites. This is Small ribosomal subunit protein uS13 from Thermoanaerobacter pseudethanolicus (strain ATCC 33223 / 39E) (Clostridium thermohydrosulfuricum).